We begin with the raw amino-acid sequence, 243 residues long: PF03932 family protein CutC (243 aa).

Belongs to the CutC family.

Its subcellular location is the cytoplasm. This chain is PF03932 family protein CutC, found in Glaesserella parasuis serovar 5 (strain SH0165) (Haemophilus parasuis).